A 372-amino-acid chain; its full sequence is 4-hydroxy-3-methylbut-2-en-1-yl diphosphate synthase (flavodoxin) (372 aa).

Positions 270, 273, 305, and 312 each coordinate [4Fe-4S] cluster.

This sequence belongs to the IspG family. It depends on [4Fe-4S] cluster as a cofactor.

The enzyme catalyses (2E)-4-hydroxy-3-methylbut-2-enyl diphosphate + oxidized [flavodoxin] + H2O + 2 H(+) = 2-C-methyl-D-erythritol 2,4-cyclic diphosphate + reduced [flavodoxin]. It participates in isoprenoid biosynthesis; isopentenyl diphosphate biosynthesis via DXP pathway; isopentenyl diphosphate from 1-deoxy-D-xylulose 5-phosphate: step 5/6. Its function is as follows. Converts 2C-methyl-D-erythritol 2,4-cyclodiphosphate (ME-2,4cPP) into 1-hydroxy-2-methyl-2-(E)-butenyl 4-diphosphate. This Cronobacter sakazakii (strain ATCC BAA-894) (Enterobacter sakazakii) protein is 4-hydroxy-3-methylbut-2-en-1-yl diphosphate synthase (flavodoxin).